An 809-amino-acid polypeptide reads, in one-letter code: Leucine--tRNA ligase (809 aa).

Positions 40–51 (PYPSGQGLHVGH) match the 'HIGH' region motif. The 'KMSKS' region motif lies at 581 to 585 (KMSKS). Lys-584 contributes to the ATP binding site.

Belongs to the class-I aminoacyl-tRNA synthetase family.

Its subcellular location is the cytoplasm. It catalyses the reaction tRNA(Leu) + L-leucine + ATP = L-leucyl-tRNA(Leu) + AMP + diphosphate. In Levilactobacillus brevis (strain ATCC 367 / BCRC 12310 / CIP 105137 / JCM 1170 / LMG 11437 / NCIMB 947 / NCTC 947) (Lactobacillus brevis), this protein is Leucine--tRNA ligase.